A 204-amino-acid polypeptide reads, in one-letter code: Large ribosomal subunit protein uL4 (204 aa).

A disordered region spans residues 53–74; it reads AYVSGGGKKPWRQKGRGGARAG.

Belongs to the universal ribosomal protein uL4 family. As to quaternary structure, part of the 50S ribosomal subunit.

Its function is as follows. One of the primary rRNA binding proteins, this protein initially binds near the 5'-end of the 23S rRNA. It is important during the early stages of 50S assembly. It makes multiple contacts with different domains of the 23S rRNA in the assembled 50S subunit and ribosome. In terms of biological role, forms part of the polypeptide exit tunnel. This Campylobacter curvus (strain 525.92) protein is Large ribosomal subunit protein uL4.